A 682-amino-acid chain; its full sequence is DNA-directed RNA polymerase subunit beta' (682 aa).

4 residues coordinate Zn(2+): Cys-69, Cys-71, Cys-87, and Cys-90. Residues Asp-489, Asp-491, and Asp-493 each coordinate Mg(2+).

This sequence belongs to the RNA polymerase beta' chain family. RpoC1 subfamily. As to quaternary structure, in plastids the minimal PEP RNA polymerase catalytic core is composed of four subunits: alpha, beta, beta', and beta''. When a (nuclear-encoded) sigma factor is associated with the core the holoenzyme is formed, which can initiate transcription. Mg(2+) is required as a cofactor. Zn(2+) serves as cofactor.

It localises to the plastid. Its subcellular location is the chloroplast. The catalysed reaction is RNA(n) + a ribonucleoside 5'-triphosphate = RNA(n+1) + diphosphate. In terms of biological role, DNA-dependent RNA polymerase catalyzes the transcription of DNA into RNA using the four ribonucleoside triphosphates as substrates. This chain is DNA-directed RNA polymerase subunit beta', found in Hordeum vulgare (Barley).